The following is a 274-amino-acid chain: 5'-nucleotidase SurE (274 aa).

The a divalent metal cation site is built by D12, D13, S45, and N103.

Belongs to the SurE nucleotidase family. A divalent metal cation serves as cofactor.

It is found in the cytoplasm. The catalysed reaction is a ribonucleoside 5'-phosphate + H2O = a ribonucleoside + phosphate. Functionally, nucleotidase that shows phosphatase activity on nucleoside 5'-monophosphates. The polypeptide is 5'-nucleotidase SurE (Chlamydia felis (strain Fe/C-56) (Chlamydophila felis)).